A 182-amino-acid polypeptide reads, in one-letter code: NADH-quinone oxidoreductase subunit I (182 aa).

4Fe-4S ferredoxin-type domains lie at 50-82 (IILSRDPDGDERCVACNLCAVACPVGCISLQKA) and 92-121 (EFFRINFSRCIFCGLCEEACPTTAIQMTPD). 8 residues coordinate [4Fe-4S] cluster: Cys-62, Cys-65, Cys-68, Cys-72, Cys-101, Cys-104, Cys-107, and Cys-111.

It belongs to the complex I 23 kDa subunit family. As to quaternary structure, NDH-1 is composed of 14 different subunits. Subunits NuoA, H, J, K, L, M, N constitute the membrane sector of the complex. The cofactor is [4Fe-4S] cluster.

Its subcellular location is the cell inner membrane. It catalyses the reaction a quinone + NADH + 5 H(+)(in) = a quinol + NAD(+) + 4 H(+)(out). Its function is as follows. NDH-1 shuttles electrons from NADH, via FMN and iron-sulfur (Fe-S) centers, to quinones in the respiratory chain. The immediate electron acceptor for the enzyme in this species is believed to be ubiquinone. Couples the redox reaction to proton translocation (for every two electrons transferred, four hydrogen ions are translocated across the cytoplasmic membrane), and thus conserves the redox energy in a proton gradient. The chain is NADH-quinone oxidoreductase subunit I from Psychrobacter cryohalolentis (strain ATCC BAA-1226 / DSM 17306 / VKM B-2378 / K5).